Here is a 199-residue protein sequence, read N- to C-terminus: Photosystem I reaction center subunit XI (199 aa).

The next 2 helical transmembrane spans lie at 108–128 and 165–185; these read ITAG…LLVL and FWLG…TLHL.

This sequence belongs to the PsaL family.

It localises to the cellular thylakoid membrane. In Prochlorococcus marinus (strain MIT 9515), this protein is Photosystem I reaction center subunit XI.